The chain runs to 291 residues: Probable alpha-L-glutamate ligase (291 aa).

An ATP-grasp domain is found at 104-287 (HQLLASQGID…VAGTIIQHLE (184 aa)). ATP is bound by residues Lys141, 178–179 (EF), Asp187, and 211–213 (RSN). Residues Asp248, Glu260, and Asn262 each contribute to the Mg(2+) site. Positions 248, 260, and 262 each coordinate Mn(2+).

It belongs to the RimK family. Mg(2+) is required as a cofactor. Mn(2+) serves as cofactor.

This chain is Probable alpha-L-glutamate ligase, found in Xanthomonas campestris pv. campestris (strain 8004).